The following is a 993-amino-acid chain: Replication protein 1a (993 aa).

Residues 50 to 409 (RNVLSVKDSE…TIVINGMSMQ (360 aa)) form a methyltransferase region. Residues 72–290 (HLTQQEFAPH…HDWENIKSFL (219 aa)) form the Alphavirus-like MT domain. The tract at residues 537-565 (LAQPVDEVSDSPEVPSSTPDDTADVCGKE) is disordered. A (+)RNA virus helicase ATP-binding domain is found at 687–838 (CVICNSESLS…KIIPDETSDA (152 aa)). The ATP-dependent helicase stretch occupies residues 712-975 (VDGVAGCGKT…LTRHKVTFRY (264 aa)). ATP is bound at residue 714 to 721 (GVAGCGKT). Positions 839 to 993 (DTTFRSPQDV…DLIAECIARA (155 aa)) constitute a (+)RNA virus helicase C-terminal domain.

This sequence belongs to the bromoviridae replication protein 1a family. As to quaternary structure, interacts with RNA-directed RNA polymerase 2a.

Its subcellular location is the host endoplasmic reticulum membrane. Functionally, involved in the virus replication. Contains a helicase domain and a methyltransferase domain. The methyltransferase domain is probably involved in viral RNA capping. Involved in the formation of ER membrane spherular invaginations in which RNA replication complexes form. The polypeptide is Replication protein 1a (Cucumber mosaic virus (strain O) (CMV)).